We begin with the raw amino-acid sequence, 169 residues long: Fumarase E (169 aa).

It belongs to the MtlR/FumE family.

It catalyses the reaction (S)-malate = fumarate + H2O. Functionally, in vitro catalyzes the addition of water to fumarate, forming malate. Cannot catalyze the reverse reaction. Cannot use the cis-isomer maleate as substrate. The sequence is that of Fumarase E from Escherichia coli (strain K12).